Reading from the N-terminus, the 189-residue chain is MADEQNLDNQNPETPEQSQADVAEDLAARVQSLEEQLAAAQDQSLRVAAELQNIRRRAEQDVEKAHKFALEKFAGDLLAVADSLERGLELSNPDDEAVKPMREGVELTLKLLLDTLARHQLEQLDPHGEPFNPEHHQAMAMEESTHVEPGSVLKVFQKGYLLNGRLLRPAMVVVSKAPADAPPSIDEKA.

The interval 1-21 (MADEQNLDNQNPETPEQSQAD) is disordered. Residues 7 to 20 (LDNQNPETPEQSQA) show a composition bias toward polar residues.

The protein belongs to the GrpE family. As to quaternary structure, homodimer.

The protein localises to the cytoplasm. Its function is as follows. Participates actively in the response to hyperosmotic and heat shock by preventing the aggregation of stress-denatured proteins, in association with DnaK and GrpE. It is the nucleotide exchange factor for DnaK and may function as a thermosensor. Unfolded proteins bind initially to DnaJ; upon interaction with the DnaJ-bound protein, DnaK hydrolyzes its bound ATP, resulting in the formation of a stable complex. GrpE releases ADP from DnaK; ATP binding to DnaK triggers the release of the substrate protein, thus completing the reaction cycle. Several rounds of ATP-dependent interactions between DnaJ, DnaK and GrpE are required for fully efficient folding. In Stutzerimonas stutzeri (strain A1501) (Pseudomonas stutzeri), this protein is Protein GrpE.